A 164-amino-acid chain; its full sequence is Crossover junction endodeoxyribonuclease RuvC (164 aa).

Catalysis depends on residues D7, E67, and D139. The Mg(2+) site is built by D7, E67, and D139.

Belongs to the RuvC family. Homodimer which binds Holliday junction (HJ) DNA. The HJ becomes 2-fold symmetrical on binding to RuvC with unstacked arms; it has a different conformation from HJ DNA in complex with RuvA. In the full resolvosome a probable DNA-RuvA(4)-RuvB(12)-RuvC(2) complex forms which resolves the HJ. The cofactor is Mg(2+).

The protein resides in the cytoplasm. The catalysed reaction is Endonucleolytic cleavage at a junction such as a reciprocal single-stranded crossover between two homologous DNA duplexes (Holliday junction).. The RuvA-RuvB-RuvC complex processes Holliday junction (HJ) DNA during genetic recombination and DNA repair. Endonuclease that resolves HJ intermediates. Cleaves cruciform DNA by making single-stranded nicks across the HJ at symmetrical positions within the homologous arms, yielding a 5'-phosphate and a 3'-hydroxyl group; requires a central core of homology in the junction. The consensus cleavage sequence is 5'-(A/T)TT(C/G)-3'. Cleavage occurs on the 3'-side of the TT dinucleotide at the point of strand exchange. HJ branch migration catalyzed by RuvA-RuvB allows RuvC to scan DNA until it finds its consensus sequence, where it cleaves and resolves the cruciform DNA. This Citrifermentans bemidjiense (strain ATCC BAA-1014 / DSM 16622 / JCM 12645 / Bem) (Geobacter bemidjiensis) protein is Crossover junction endodeoxyribonuclease RuvC.